The primary structure comprises 40 residues: Sarcotoxin-1D (40 aa).

The protein belongs to the cecropin family.

Its subcellular location is the secreted. In terms of biological role, sarcotoxins, which are potent bactericidal proteins, are produced in response to injury. They are cytotoxic to both Gram-positive and Gram-negative bacteria. This is Sarcotoxin-1D from Sarcophaga peregrina (Flesh fly).